The following is a 602-amino-acid chain: FAD-binding monooxygenase hmp7 (602 aa).

FAD is bound by residues 108–111, 120–121, and Tyr-126; these read TWYW and DV. 118–120 is an NADP(+) binding site; sequence QCD. Residues 252 to 258 and 275 to 276 contribute to the NADP(+) site; these read TGATAVQ and RT.

It belongs to the FAD-binding monooxygenase family. It depends on FAD as a cofactor.

It participates in secondary metabolite biosynthesis. FAD-binding monooxygenase; part of the gene cluster that mediates the biosynthesis of hypothemycin, a resorcylic acid lactone (RAL) that irreversibly inhibits a subset of protein kinases with a conserved cysteine in the ATP binding site such as human ERK2. The first step is performed by both PKSs hmp3 and hmp8 and leads to the production of 7',8'-dehydrozearalenol (DHZ). The highly reducing PKS hpm8 synthesizes the reduced hexaketide (7S,11S,2E,8E)-7,11-dihydroxy-dodeca-2,8-dienoate, which is transferred downstream to the non-reducing PKS hpm3. Hpm3 then extends the reduced hexaketide to a nonaketide, after which regioselective cyclization and macrolactonization affords DHZ. The next step is the conversion of DHZ into aigialomycin C and is performed by the O-methyltransferase hmp5, the FAD-binding monooxygenase hmp7, and the cytochrome P450 monooxygenase hmp1. The wide substrate tolerance of the hmp5 and hmp7 implies that the reactions from DHZ to aigialomycin C can occur in any order. The steps from aigialomycin C to hypothemycin are less well established. The FAD-linked oxidoreductase hmp9 presumably catalyzes oxidation of the C-6' hydroxyl to a ketone. The timing of this oxidation is important, since the resulting enone functional group is a Michael acceptor that can react spontaneously with glutathione, an abundant metabolite in fungal cells. The glutathione S-transferase hmp2 catalyzes cis-trans isomerization of the 7',8' double bond with equilibrium favoring the trans isomer. The hpm6-encoded transporter might preferentially pump hypothemycin out of the cell relative to the trans isomer aigialomycin A. The cis-to-trans isomerization may be coupled with C-4' hydroxylation, since all known hypothemycin analogs containing the enone functional group also have hydroxyl groups at both C-4' and C-5'. This is FAD-binding monooxygenase hmp7 from Hypomyces subiculosus (Nectria subiculosa).